We begin with the raw amino-acid sequence, 244 residues long: 1-(5-phosphoribosyl)-5-[(5-phosphoribosylamino)methylideneamino] imidazole-4-carboxamide isomerase (244 aa).

Aspartate 10 (proton acceptor) is an active-site residue. Residue aspartate 129 is the Proton donor of the active site.

This sequence belongs to the HisA/HisF family.

The protein localises to the cytoplasm. It carries out the reaction 1-(5-phospho-beta-D-ribosyl)-5-[(5-phospho-beta-D-ribosylamino)methylideneamino]imidazole-4-carboxamide = 5-[(5-phospho-1-deoxy-D-ribulos-1-ylimino)methylamino]-1-(5-phospho-beta-D-ribosyl)imidazole-4-carboxamide. The protein operates within amino-acid biosynthesis; L-histidine biosynthesis; L-histidine from 5-phospho-alpha-D-ribose 1-diphosphate: step 4/9. In Rhodococcus jostii (strain RHA1), this protein is 1-(5-phosphoribosyl)-5-[(5-phosphoribosylamino)methylideneamino] imidazole-4-carboxamide isomerase.